A 151-amino-acid polypeptide reads, in one-letter code: Protein Smg homolog (151 aa).

Belongs to the Smg family.

The sequence is that of Protein Smg homolog from Laribacter hongkongensis (strain HLHK9).